A 275-amino-acid polypeptide reads, in one-letter code: MNTKEIVNKYEFKFNKNLGQNFLIDESVLEDIIEGAEISKEDTVIEIGPGVGTLTKELLERAKEVYSIELDGDLIPILQEELKEYNNFTLIHKDALKINFNELMENKDSIKLVANLPYYVTTPIISRLLTEKCDFKSLTIMIQKEVAERINAEPNCKEYGSLTVLVQYYCNTKIIRKVSPNSFIPKPKVDSIVIKLDRLSEPRVRVKSQKLFFNVVRSSFNMRRKTLWNSLKSLNIDKESMENAFERAGIDPKRRGETLSIEEFGKLSDCIYDIL.

6 residues coordinate S-adenosyl-L-methionine: Asn-21, Leu-23, Gly-48, Glu-69, Asp-94, and Asn-115.

It belongs to the class I-like SAM-binding methyltransferase superfamily. rRNA adenine N(6)-methyltransferase family. RsmA subfamily.

The protein localises to the cytoplasm. It catalyses the reaction adenosine(1518)/adenosine(1519) in 16S rRNA + 4 S-adenosyl-L-methionine = N(6)-dimethyladenosine(1518)/N(6)-dimethyladenosine(1519) in 16S rRNA + 4 S-adenosyl-L-homocysteine + 4 H(+). In terms of biological role, specifically dimethylates two adjacent adenosines (A1518 and A1519) in the loop of a conserved hairpin near the 3'-end of 16S rRNA in the 30S particle. May play a critical role in biogenesis of 30S subunits. The chain is Ribosomal RNA small subunit methyltransferase A from Clostridium botulinum (strain Okra / Type B1).